A 146-amino-acid chain; its full sequence is Hemoglobin subunit beta (146 aa).

A Globin domain is found at 2–146; that stretch reads QWSDSERTII…VVMFLGKQYH (145 aa). 2 residues coordinate heme b: His-63 and His-92.

The protein belongs to the globin family. As to quaternary structure, heterotetramer of two alpha chains and two beta chains. As to expression, red blood cells.

Its function is as follows. Involved in oxygen transport from the lung to the various peripheral tissues. This is Hemoglobin subunit beta (hbb) from Artedidraco orianae (Barbeled plunderfish).